Reading from the N-terminus, the 459-residue chain is NADH oxidase (459 aa).

N10 is an FAD binding site. H11 (proton acceptor) is an active-site residue. Residues A12, D34, Q35, C44, V81, A110, S113, K143, and Y172 each coordinate FAD. C44 serves as the catalytic Redox-active. Residue C44 is modified to Cysteine sulfinic acid (-SO2H). I173, D192, Y201, and G256 together coordinate NAD(+). Position 294 (D294) interacts with FAD. A310 is a binding site for NAD(+). Residues L311, A312, and S313 each contribute to the FAD site. G341 contacts NAD(+). F439 contributes to the FAD binding site.

The protein belongs to the class-III pyridine nucleotide-disulfide oxidoreductase family. The cofactor is FAD.

The protein localises to the secreted. It is found in the cell wall. The catalysed reaction is 2 NADH + O2 + 2 H(+) = 2 NAD(+) + 2 H2O. Functionally, catalyzes the four-electron reduction of molecular oxygen to water. Plays a role in redox balance maintenance. May be involved in mediating bacterial adhesion to host cells. May be considered a potential virulence factor. In Streptococcus pneumoniae serotype 4 (strain ATCC BAA-334 / TIGR4), this protein is NADH oxidase.